The following is a 481-amino-acid chain: UDP-N-acetylmuramate--L-alanine ligase (481 aa).

135–141 is a binding site for ATP; that stretch reads GTHGKTT.

This sequence belongs to the MurCDEF family.

Its subcellular location is the cytoplasm. It carries out the reaction UDP-N-acetyl-alpha-D-muramate + L-alanine + ATP = UDP-N-acetyl-alpha-D-muramoyl-L-alanine + ADP + phosphate + H(+). It functions in the pathway cell wall biogenesis; peptidoglycan biosynthesis. Functionally, cell wall formation. In Nostoc punctiforme (strain ATCC 29133 / PCC 73102), this protein is UDP-N-acetylmuramate--L-alanine ligase.